The primary structure comprises 355 residues: MPAHMLQEISSSYTTTTTITAPPSGNEREKVKTVPLHLEEDIRPEMKEDIHDPTYQDEEGPPPKLEYVWRNIILMVLLHLGGLYGIILVPSCKLYTCLFGIFYYMTSALGITAGAHRLWSHRTYKARLPLRIFLIIANTMAFQNDVYEWARDHRAHHKFSETHADPHNSRRGFFFSHVGWLLVRKHPAVKEKGGKLDMSDLKAEKLVMFQRRYYKPGLLLMCFILPTLVPWYCWGETFVNSLFVSTFLRYTLVLNATWLVNSAAHLYGYRPYDKNIQSRENILVSLGAVGEGFHNYHHTFPFDYSASEYRWHINFTTFFIDCMAALGLAYDRKKVSKATVLARIKRTGDGSHKSS.

Over 1 to 68 (MPAHMLQEIS…EGPPPKLEYV (68 aa)) the chain is Cytoplasmic. Low complexity predominate over residues 9 to 20 (ISSSYTTTTTIT). A disordered region spans residues 9 to 33 (ISSSYTTTTTITAPPSGNEREKVKT). The chain crosses the membrane as a helical span at residues 69–89 (WRNIILMVLLHLGGLYGIILV). N71 contacts substrate. Residues 90-93 (PSCK) are Lumenal-facing. A helical transmembrane segment spans residues 94–114 (LYTCLFGIFYYMTSALGITAG). Topologically, residues 115–213 (AHRLWSHRTY…EKLVMFQRRY (99 aa)) are cytoplasmic. Fe cation contacts are provided by H116 and H121. Positions 116–121 (HRLWSH) match the Histidine box-1 motif. Substrate contacts are provided by N144, R151, and D152. Residues H153, H156, and H157 each coordinate Fe cation. The Histidine box-2 signature appears at 153 to 157 (HRAHH). 2 residues coordinate substrate: R184 and K185. A helical transmembrane segment spans residues 214–233 (YKPGLLLMCFILPTLVPWYC). Topologically, residues 234–237 (WGET) are lumenal. A helical transmembrane segment spans residues 238-259 (FVNSLFVSTFLRYTLVLNATWL). Substrate is bound at residue W258. Over 260-355 (VNSAAHLYGY…RTGDGSHKSS (96 aa)) the chain is Cytoplasmic. Residues H265, H294, H297, and H298 each contribute to the Fe cation site. The short motif at 294–298 (HNYHH) is the Histidine box-3 element.

Belongs to the fatty acid desaturase type 1 family. Fe(2+) serves as cofactor. As to expression, detected in liver (at protein level). Detected in skin and liver. Detected in sebaceous gland, but not in hair follicle. Detected in white and brown adipose tissue, eyelid, Harderian gland, and at lower levels in Meibomian gland, eyeball and adrenal gland. Highly expressed in liver, and detected at low levels in brain, heart, lung, stomach, skeletal muscle and kidney.

Its subcellular location is the endoplasmic reticulum membrane. It localises to the microsome membrane. The catalysed reaction is octadecanoyl-CoA + 2 Fe(II)-[cytochrome b5] + O2 + 2 H(+) = (9Z)-octadecenoyl-CoA + 2 Fe(III)-[cytochrome b5] + 2 H2O. Functionally, stearoyl-CoA desaturase that utilizes O(2) and electrons from reduced cytochrome b5 to introduce the first double bond into saturated fatty acyl-CoA substrates. Catalyzes the insertion of a cis double bond at the Delta-9 position into fatty acyl-CoA substrates including palmitoyl-CoA and stearoyl-CoA. Gives rise to a mixture of 16:1 and 18:1 unsaturated fatty acids. Plays an important role in lipid biosynthesis. Plays an important role in regulating the expression of genes that are involved in lipogenesis and in regulating mitochondrial fatty acid oxidation. Plays an important role in body energy homeostasis. Contributes to the biosynthesis of membrane phospholipids, cholesterol esters and triglycerides. Required for normal development of sebaceous glands. Required for the biosynthesis of normal levels of Delta-9 unsaturated fatty acids and 1-alkyl-2,3-diacylglycerol in the Harderian gland. Required for normal production of meibum, an oily material that prevents drying of the cornea. The protein is Acyl-CoA desaturase 1 (Scd1) of Mus musculus (Mouse).